Reading from the N-terminus, the 172-residue chain is Ribosome maturation factor RimM (172 aa).

The region spanning 95–168 is the PRC barrel domain; that stretch reads AEGEFYYHQI…RVDVEIMEGL (74 aa).

Belongs to the RimM family. As to quaternary structure, binds ribosomal protein uS19.

The protein resides in the cytoplasm. An accessory protein needed during the final step in the assembly of 30S ribosomal subunit, possibly for assembly of the head region. Essential for efficient processing of 16S rRNA. May be needed both before and after RbfA during the maturation of 16S rRNA. It has affinity for free ribosomal 30S subunits but not for 70S ribosomes. In Streptococcus equi subsp. equi (strain 4047), this protein is Ribosome maturation factor RimM.